We begin with the raw amino-acid sequence, 236 residues long: Glucosamine-6-phosphate deaminase (236 aa).

Asp67 functions as the Proton acceptor; for enolization step in the catalytic mechanism. Asn136 functions as the For ring-opening step in the catalytic mechanism. His138 serves as the catalytic Proton acceptor; for ring-opening step. The For ring-opening step role is filled by Glu143.

Belongs to the glucosamine/galactosamine-6-phosphate isomerase family. NagB subfamily.

The enzyme catalyses alpha-D-glucosamine 6-phosphate + H2O = beta-D-fructose 6-phosphate + NH4(+). Its pathway is amino-sugar metabolism; N-acetylneuraminate degradation; D-fructose 6-phosphate from N-acetylneuraminate: step 5/5. Functionally, catalyzes the reversible isomerization-deamination of glucosamine 6-phosphate (GlcN6P) to form fructose 6-phosphate (Fru6P) and ammonium ion. The polypeptide is Glucosamine-6-phosphate deaminase (Lachnoclostridium phytofermentans (strain ATCC 700394 / DSM 18823 / ISDg) (Clostridium phytofermentans)).